The sequence spans 410 residues: WD repeat and FYVE domain-containing protein 1 (410 aa).

WD repeat units follow at residues 22 to 61, 66 to 105, 112 to 150, 153 to 192, 197 to 236, and 240 to 279; these read GHQDAVTAALLIPKEDGVITASEDRTIRVWLKRDSGQYWP, TMASPCSAMAYHHDSRRIFVGQDNGAVMEFHVSEDFNKMN, AHQNRVTAIIFSLATEWVISTGHDKCVSWMCTRSGNMLG, FFSSWASCLQYDFDTQYAFVGDYSGQITLLKLEQSTCSVI, GHEGSIACLWWDPIQRLLFSGASDNSVIMWDIGGRKGRTL, and GHHDRVQALCYLQLTRQLVSCSSDGGIAVWNMDVSREEAP. The segment at 281-352 adopts an FYVE-type zinc-finger fold; sequence WLESDSCQKC…VCDSCYDSIK (72 aa). Positions 287, 290, 314, 317, 322, 325, 344, and 347 each coordinate Zn(2+). The WD 7 repeat unit spans residues 364-403; sequence EGKHNISHMSMDVARGLMVTCGTDRVVKIWDMTPVVGCSL. Serine 408 is subject to Phosphoserine.

As to quaternary structure, binds PtdIns3P in vitro with high specificity over other phosphoinositides. Interacts (via WD repeat 2) with tyrosine-phosphorylated TLR3 (via TIR domain) in response to poly(I:C). Interacts with TLR4 in response to LPS. Interacts with TICAM1 in response to poly(I:C).

Its subcellular location is the early endosome. In terms of biological role, positively regulates TLR3- and TLR4-mediated signaling pathways by bridging the interaction between TLR3 or TLR4 and TICAM1. Promotes TLR3/4 ligand-induced activation of transcription factors IRF3 and NF-kappa-B, as well as the production of IFN-beta and inflammatory cytokines. In Bos taurus (Bovine), this protein is WD repeat and FYVE domain-containing protein 1 (WDFY1).